An 81-amino-acid chain; its full sequence is Photosystem I iron-sulfur center (81 aa).

2 consecutive 4Fe-4S ferredoxin-type domains span residues 1-31 and 39-68; these read MSHK…MVPW and IASS…IRVY. Residues Cys11, Cys14, Cys17, Cys21, Cys48, Cys51, Cys54, and Cys58 each contribute to the [4Fe-4S] cluster site.

As to quaternary structure, the cyanobacterial PSI reaction center is composed of one copy each of PsaA,B,C,D,E,F,I,J,K,L,M and X, and forms trimeric complexes. [4Fe-4S] cluster is required as a cofactor.

The protein resides in the cellular thylakoid membrane. It catalyses the reaction reduced [plastocyanin] + hnu + oxidized [2Fe-2S]-[ferredoxin] = oxidized [plastocyanin] + reduced [2Fe-2S]-[ferredoxin]. Functionally, apoprotein for the two 4Fe-4S centers FA and FB of photosystem I (PSI); essential for photochemical activity. FB is the terminal electron acceptor of PSI, donating electrons to ferredoxin. The C-terminus interacts with PsaA/B/D and helps assemble the protein into the PSI complex. Required for binding of PsaD and PsaE to PSI. PSI is a plastocyanin/cytochrome c6-ferredoxin oxidoreductase, converting photonic excitation into a charge separation, which transfers an electron from the donor P700 chlorophyll pair to the spectroscopically characterized acceptors A0, A1, FX, FA and FB in turn. The sequence is that of Photosystem I iron-sulfur center from Rippkaea orientalis (strain PCC 8801 / RF-1) (Cyanothece sp. (strain PCC 8801)).